The chain runs to 166 residues: Large ribosomal subunit protein mL49 (166 aa).

A disordered region spans residues 54–77; that stretch reads PTKIPEPPKHKHYPTPSGWQPPRD.

The protein belongs to the mitochondrion-specific ribosomal protein mL49 family. As to quaternary structure, component of the mitochondrial ribosome large subunit (39S) which comprises a 16S rRNA and about 50 distinct proteins. Interacts with OXA1L.

It is found in the mitochondrion. The sequence is that of Large ribosomal subunit protein mL49 (Mrpl49) from Mus musculus (Mouse).